The following is a 230-amino-acid chain: Orotidine 5'-phosphate decarboxylase (230 aa).

Substrate is bound by residues D10, K32, 59–68 (DLKYHDIPNT), T119, R180, Q189, G209, and R210. The Proton donor role is filled by K61.

It belongs to the OMP decarboxylase family. Type 1 subfamily. Homodimer.

The catalysed reaction is orotidine 5'-phosphate + H(+) = UMP + CO2. Its pathway is pyrimidine metabolism; UMP biosynthesis via de novo pathway; UMP from orotate: step 2/2. Catalyzes the decarboxylation of orotidine 5'-monophosphate (OMP) to uridine 5'-monophosphate (UMP). In Haemophilus ducreyi (strain 35000HP / ATCC 700724), this protein is Orotidine 5'-phosphate decarboxylase.